We begin with the raw amino-acid sequence, 429 residues long: 3-phosphoshikimate 1-carboxyvinyltransferase (429 aa).

Positions 23, 24, and 28 each coordinate 3-phosphoshikimate. Lys-23 lines the phosphoenolpyruvate pocket. Positions 95 and 123 each coordinate phosphoenolpyruvate. Residues Ser-168, Gln-170, Asp-316, and Lys-343 each coordinate 3-phosphoshikimate. A phosphoenolpyruvate-binding site is contributed by Gln-170. The Proton acceptor role is filled by Asp-316. The phosphoenolpyruvate site is built by Arg-347 and Arg-389.

This sequence belongs to the EPSP synthase family. Monomer.

It is found in the cytoplasm. The enzyme catalyses 3-phosphoshikimate + phosphoenolpyruvate = 5-O-(1-carboxyvinyl)-3-phosphoshikimate + phosphate. Its pathway is metabolic intermediate biosynthesis; chorismate biosynthesis; chorismate from D-erythrose 4-phosphate and phosphoenolpyruvate: step 6/7. Catalyzes the transfer of the enolpyruvyl moiety of phosphoenolpyruvate (PEP) to the 5-hydroxyl of shikimate-3-phosphate (S3P) to produce enolpyruvyl shikimate-3-phosphate and inorganic phosphate. The protein is 3-phosphoshikimate 1-carboxyvinyltransferase of Oceanobacillus iheyensis (strain DSM 14371 / CIP 107618 / JCM 11309 / KCTC 3954 / HTE831).